Reading from the N-terminus, the 245-residue chain is tRNA pseudouridine synthase A (245 aa).

Aspartate 52 (nucleophile) is an active-site residue. Tyrosine 111 contacts substrate.

It belongs to the tRNA pseudouridine synthase TruA family. Homodimer.

The enzyme catalyses uridine(38/39/40) in tRNA = pseudouridine(38/39/40) in tRNA. Formation of pseudouridine at positions 38, 39 and 40 in the anticodon stem and loop of transfer RNAs. The polypeptide is tRNA pseudouridine synthase A (Rickettsia rickettsii (strain Iowa)).